We begin with the raw amino-acid sequence, 159 residues long: Ribosomal RNA large subunit methyltransferase H (159 aa).

Residues L76, G108, and 127–132 (FSKMTF) contribute to the S-adenosyl-L-methionine site.

It belongs to the RNA methyltransferase RlmH family. In terms of assembly, homodimer.

Its subcellular location is the cytoplasm. The enzyme catalyses pseudouridine(1915) in 23S rRNA + S-adenosyl-L-methionine = N(3)-methylpseudouridine(1915) in 23S rRNA + S-adenosyl-L-homocysteine + H(+). Functionally, specifically methylates the pseudouridine at position 1915 (m3Psi1915) in 23S rRNA. The chain is Ribosomal RNA large subunit methyltransferase H from Geobacillus sp. (strain WCH70).